Reading from the N-terminus, the 1766-residue chain is DNA-directed RNA polymerase II subunit RPB1-A (1766 aa).

Zn(2+) is bound by residues C69, C72, C79, and H82. Mg(2+) contacts are provided by D487, D489, and D491. Residues 813–825 are bridging helix; sequence PHEFFFHTMAGRE. Positions 1660-1766 are disordered; that stretch reads HAMSSAAPPS…EFGDEEEEEQ (107 aa). Residues 1706–1716 are compositionally biased toward basic and acidic residues; it reads RGDEPSTHRSD. The span at 1742–1756 shows a compositional bias: low complexity; it reads PTAKTPQQAAPPTAA.

The protein belongs to the RNA polymerase beta' chain family. Component of the RNA polymerase II (Pol II) complex consisting of 12 subunits.

The protein resides in the nucleus. The catalysed reaction is RNA(n) + a ribonucleoside 5'-triphosphate = RNA(n+1) + diphosphate. In terms of biological role, DNA-dependent RNA polymerase catalyzes the transcription of DNA into RNA using the four ribonucleoside triphosphates as substrates. Largest and catalytic component of RNA polymerase II which synthesizes mRNA precursors and many functional non-coding RNAs. Forms the polymerase active center together with the second largest subunit. Pol II is the central component of the basal RNA polymerase II transcription machinery. It is composed of mobile elements that move relative to each other. RPB1 is part of the core element with the central large cleft, the clamp element that moves to open and close the cleft and the jaws that are thought to grab the incoming DNA template. At the start of transcription, a single-stranded DNA template strand of the promoter is positioned within the central active site cleft of Pol II. A bridging helix emanates from RPB1 and crosses the cleft near the catalytic site and is thought to promote translocation of Pol II by acting as a ratchet that moves the RNA-DNA hybrid through the active site by switching from straight to bent conformations at each step of nucleotide addition. During transcription elongation, Pol II moves on the template as the transcript elongates. This is DNA-directed RNA polymerase II subunit RPB1-A (TRP4.8) from Trypanosoma brucei brucei.